Here is a 106-residue protein sequence, read N- to C-terminus: Hydrogenase expression/formation protein HoxL (106 aa).

The protein belongs to the HupF/HypC family.

The sequence is that of Hydrogenase expression/formation protein HoxL (hoxL) from Azotobacter vinelandii.